Consider the following 556-residue polypeptide: Formate--tetrahydrofolate ligase (556 aa).

65–72 contacts ATP; the sequence is TPAGEGKS.

It belongs to the formate--tetrahydrofolate ligase family.

The catalysed reaction is (6S)-5,6,7,8-tetrahydrofolate + formate + ATP = (6R)-10-formyltetrahydrofolate + ADP + phosphate. It functions in the pathway one-carbon metabolism; tetrahydrofolate interconversion. This chain is Formate--tetrahydrofolate ligase, found in Streptococcus uberis (strain ATCC BAA-854 / 0140J).